Consider the following 158-residue polypeptide: Molybdopterin synthase catalytic subunit (158 aa).

Substrate is bound by residues 107–108, Lys-123, and 130–132; these read HR and KKE.

Belongs to the MoaE family. MOCS2B subfamily. Heterotetramer; composed of 2 small (mocs2s) and 2 large (mocs2l) subunits.

It localises to the cytoplasm. It catalyses the reaction 2 [molybdopterin-synthase sulfur-carrier protein]-C-terminal-Gly-aminoethanethioate + cyclic pyranopterin phosphate + H2O = molybdopterin + 2 [molybdopterin-synthase sulfur-carrier protein]-C-terminal Gly-Gly + 2 H(+). It participates in cofactor biosynthesis; molybdopterin biosynthesis. Its function is as follows. Catalytic subunit of the molybdopterin synthase complex, a complex that catalyzes the conversion of precursor Z into molybdopterin. Acts by mediating the incorporation of 2 sulfur atoms from thiocarboxylated mocs2s into precursor Z to generate a dithiolene group. This Dictyostelium discoideum (Social amoeba) protein is Molybdopterin synthase catalytic subunit (mocs2l).